The sequence spans 279 residues: Methyltransferase ausD (279 aa).

S-adenosyl-L-methionine-binding positions include 124–125, 152–153, and arginine 244; these read DL and DI.

Belongs to the class I-like SAM-binding methyltransferase superfamily. In terms of assembly, homodimer.

It functions in the pathway secondary metabolite biosynthesis; terpenoid biosynthesis. Functionally, methyltransferase; part of the gene cluster that mediates the biosynthesis of calidodehydroaustin, a fungal meroterpenoid. The first step of the pathway is the synthesis of 3,5-dimethylorsellinic acid by the polyketide synthase ausA. 3,5-dimethylorsellinic acid is then prenylated by the polyprenyl transferase ausN. Further epoxidation by the FAD-dependent monooxygenase ausM and cyclization by the probable terpene cyclase ausL lead to the formation of protoaustinoid A. Protoaustinoid A is then oxidized to spiro-lactone preaustinoid A3 by the combined action of the FAD-binding monooxygenases ausB and ausC, and the dioxygenase ausE. Acid-catalyzed keto-rearrangement and ring contraction of the tetraketide portion of preaustinoid A3 by ausJ lead to the formation of preaustinoid A4. The aldo-keto reductase ausK, with the help of ausH, is involved in the next step by transforming preaustinoid A4 into isoaustinone which is in turn hydroxylated by the P450 monooxygenase ausI to form austinolide. The cytochrome P450 monooxygenase ausG modifies austinolide to austinol. Austinol is further acetylated to austin by the O-acetyltransferase ausP, which spontaneously changes to dehydroaustin. The cytochrome P450 monooxygenase ausR then converts dehydroaustin is into 7-dehydrodehydroaustin. The hydroxylation catalyzed by ausR permits the O-acetyltransferase ausQ to add an additional acetyl group to the molecule, leading to the formation of acetoxydehydroaustin. The short chain dehydrogenase ausT catalyzes the reduction of the double bond present between carbon atoms 1 and 2 to convert 7-dehydrodehydroaustin into 1,2-dihydro-7-hydroxydehydroaustin. AusQ catalyzes not only an acetylation reaction but also the addition of the PKS ausV diketide product to 1,2-dihydro-7-hydroxydehydroaustin, forming precalidodehydroaustin. Finally, the iron/alpha-ketoglutarate-dependent dioxygenase converts precalidodehydroaustin into calidodehydroaustin. The chain is Methyltransferase ausD from Aspergillus calidoustus.